Here is a 435-residue protein sequence, read N- to C-terminus: 3-phosphoshikimate 1-carboxyvinyltransferase (435 aa).

The 3-phosphoshikimate site is built by K22, S23, and R27. Residue K22 coordinates phosphoenolpyruvate. 2 residues coordinate phosphoenolpyruvate: G94 and R122. 3-phosphoshikimate-binding residues include S166, Q168, D314, and K341. Q168 serves as a coordination point for phosphoenolpyruvate. Residue D314 is the Proton acceptor of the active site. 2 residues coordinate phosphoenolpyruvate: R345 and R388.

It belongs to the EPSP synthase family. Monomer.

It localises to the cytoplasm. The catalysed reaction is 3-phosphoshikimate + phosphoenolpyruvate = 5-O-(1-carboxyvinyl)-3-phosphoshikimate + phosphate. It functions in the pathway metabolic intermediate biosynthesis; chorismate biosynthesis; chorismate from D-erythrose 4-phosphate and phosphoenolpyruvate: step 6/7. Catalyzes the transfer of the enolpyruvyl moiety of phosphoenolpyruvate (PEP) to the 5-hydroxyl of shikimate-3-phosphate (S3P) to produce enolpyruvyl shikimate-3-phosphate and inorganic phosphate. The protein is 3-phosphoshikimate 1-carboxyvinyltransferase of Ruthia magnifica subsp. Calyptogena magnifica.